A 151-amino-acid polypeptide reads, in one-letter code: Large ribosomal subunit protein bL9 (151 aa).

This sequence belongs to the bacterial ribosomal protein bL9 family.

In terms of biological role, binds to the 23S rRNA. This Chlorobium phaeobacteroides (strain DSM 266 / SMG 266 / 2430) protein is Large ribosomal subunit protein bL9.